Here is a 206-residue protein sequence, read N- to C-terminus: Small ribosomal subunit protein uS5 (206 aa).

Over residues 1–15 the composition is skewed to polar residues; the sequence is MTDTPTKQEIQSKND. The segment at 1-50 is disordered; sequence MTDTPTKQEIQSKNDNVPAATPVEQKKNNRNDRKRNRRGDSKNLERDSDW. Residues 38-50 are compositionally biased toward basic and acidic residues; the sequence is RGDSKNLERDSDW. Positions 50 to 113 constitute an S5 DRBM domain; the sequence is WQERVVQIRR…SDGKKNLVRV (64 aa).

The protein belongs to the universal ribosomal protein uS5 family. In terms of assembly, part of the 30S ribosomal subunit. Contacts proteins S4 and S8.

Functionally, with S4 and S12 plays an important role in translational accuracy. Located at the back of the 30S subunit body where it stabilizes the conformation of the head with respect to the body. In Prochlorococcus marinus (strain AS9601), this protein is Small ribosomal subunit protein uS5.